The primary structure comprises 447 residues: Tubulin beta-6 chain (447 aa).

Positions 11, 69, 138, 142, 143, 144, 204, and 226 each coordinate GTP. E69 contacts Mg(2+). Positions 426–447 (QDATAEEEGEFDEDEELDDGMM) are disordered. A compositionally biased stretch (acidic residues) spans 429 to 447 (TAEEEGEFDEDEELDDGMM).

Belongs to the tubulin family. Dimer of alpha and beta chains. A typical microtubule is a hollow water-filled tube with an outer diameter of 25 nm and an inner diameter of 15 nM. Alpha-beta heterodimers associate head-to-tail to form protofilaments running lengthwise along the microtubule wall with the beta-tubulin subunit facing the microtubule plus end conferring a structural polarity. Microtubules usually have 13 protofilaments but different protofilament numbers can be found in some organisms and specialized cells. It depends on Mg(2+) as a cofactor.

It is found in the cytoplasm. It localises to the cytoskeleton. In terms of biological role, tubulin is the major constituent of microtubules, a cylinder consisting of laterally associated linear protofilaments composed of alpha- and beta-tubulin heterodimers. Microtubules grow by the addition of GTP-tubulin dimers to the microtubule end, where a stabilizing cap forms. Below the cap, tubulin dimers are in GDP-bound state, owing to GTPase activity of alpha-tubulin. The polypeptide is Tubulin beta-6 chain (TUBB6) (Ectocarpus variabilis (Brown alga)).